The chain runs to 338 residues: DNA-directed RNA polymerase subunit alpha (338 aa).

An alpha N-terminal domain (alpha-NTD) region spans residues 1 to 226 (MLIAQRPTLT…ELFGLARELN (226 aa)). An alpha C-terminal domain (alpha-CTD) region spans residues 243 to 338 (LAADLALPIE…DADYADEQYN (96 aa)).

This sequence belongs to the RNA polymerase alpha chain family. In terms of assembly, homodimer. The RNAP catalytic core consists of 2 alpha, 1 beta, 1 beta' and 1 omega subunit. When a sigma factor is associated with the core the holoenzyme is formed, which can initiate transcription.

It carries out the reaction RNA(n) + a ribonucleoside 5'-triphosphate = RNA(n+1) + diphosphate. In terms of biological role, DNA-dependent RNA polymerase catalyzes the transcription of DNA into RNA using the four ribonucleoside triphosphates as substrates. The polypeptide is DNA-directed RNA polymerase subunit alpha (Beutenbergia cavernae (strain ATCC BAA-8 / DSM 12333 / CCUG 43141 / JCM 11478 / NBRC 16432 / NCIMB 13614 / HKI 0122)).